Here is a 604-residue protein sequence, read N- to C-terminus: Phosphoprotein (604 aa).

Disordered regions lie at residues 1–22 (MESD…RDKS) and 39–360 (DPQE…EESN). Positions 22–42 (STNISSALNIIEFILSTDPQE) are N0 binding. 2 stretches are compositionally biased toward polar residues: residues 47–61 (NDTI…SATI) and 74–90 (KVSG…SSHE). A compositionally biased stretch (basic and acidic residues) spans 91–101 (CTTEAKDRNID). The segment covering 129–144 (GSITDSKNGTQNTENI) has biased composition (polar residues). Over residues 147-163 (NEIRKMDKDSIERKMRQ) the composition is skewed to basic and acidic residues. Polar residues predominate over residues 197–207 (TPDTRSMSVVT). Basic and acidic residues predominate over residues 245–267 (KGKDWFKKSRDTDNQTSTSDHKP). 2 stretches are compositionally biased toward low complexity: residues 277 to 300 (KTTT…ETQS) and 317 to 328 (TSTTPPTTTPRS). Residues 330-360 (RTKESIRTNSESKPKTQKTIGKERKDTEESN) show a composition bias toward basic and acidic residues. The segment at 400–470 (VDTASKIDFL…SLISNLKIMT (71 aa)) is multimerization. Residues 424–451 (LIQIQNEMLNLKADLKRMDESHRRLIEN) adopt a coiled-coil conformation. The segment at 450–483 (ENQREQLSLITSLISNLKIMTERGGKKDQNESNE) is l protein binding. The segment at 585 to 604 (KSDEEVSELMDMFNEDVNNC) is interaction with the nucleocapsid (N-RNA).

The protein belongs to the respirovirus P protein family. As to quaternary structure, homotetramer. Interacts (via multimerization domain) with polymerase L; this interaction forms the polymerase L-P complex. Interacts (via N-terminus) with N0; this interaction allows P to chaperon N0 to avoid N polymerization before encapsidation. Interacts (via C-terminus) with N-RNA template; this interaction positions the polymerase on the template. Interacts with host PI4KB; this interaction allows P to recruit PI4KB to the viral factories to generate PI4P to facilitate viral replication.

Essential cofactor of the RNA polymerase L that plays a central role in the transcription and replication by forming the polymerase complex with RNA polymerase L and recruiting L to the genomic N-RNA template for RNA synthesis. Also plays a central role in the encapsidation of nascent RNA chains by forming the encapsidation complex with the nucleocapsid protein N (N-P complex). Acts as a chaperone for newly synthesized free N protein, so-called N0, allowing encapsidation of nascent RNA chains during replication. The nucleoprotein protein N prevents excessive phosphorylation of P, which leads to down-regulation of viral transcription/ replication. Participates, together with N, in the formation of viral factories (viroplasms), which are large inclusions in the host cytoplasm where replication takes place. Recruits host PI4KB and remodel the host endoplasmic reticulum membrane to form viral replication factories. In Human parainfluenza 3 virus (strain Wash/47885/57) (HPIV-3), this protein is Phosphoprotein (P/V/D).